The primary structure comprises 55 residues: Large ribosomal subunit protein bL33 (55 aa).

This sequence belongs to the bacterial ribosomal protein bL33 family.

This chain is Large ribosomal subunit protein bL33, found in Deinococcus geothermalis (strain DSM 11300 / CIP 105573 / AG-3a).